Reading from the N-terminus, the 219-residue chain is Guanylate kinase (219 aa).

Residues 15-194 (GLMLVISSPS…AFSSVRAIVE (180 aa)) form the Guanylate kinase-like domain. 22–29 (SPSGAGKS) lines the ATP pocket.

The protein belongs to the guanylate kinase family.

The protein localises to the cytoplasm. It catalyses the reaction GMP + ATP = GDP + ADP. Functionally, essential for recycling GMP and indirectly, cGMP. The chain is Guanylate kinase from Rhizobium meliloti (strain 1021) (Ensifer meliloti).